The primary structure comprises 240 residues: UPF0502 protein Veis_2102 (240 aa).

Belongs to the UPF0502 family.

The chain is UPF0502 protein Veis_2102 from Verminephrobacter eiseniae (strain EF01-2).